The chain runs to 142 residues: Glutamate-rich protein 2 (142 aa).

Disordered stretches follow at residues 1–55 and 104–142; these read MSKN…HAPL and EKAQ…CEDG. Residues 9 to 27 are compositionally biased toward basic and acidic residues; the sequence is EQEKNNEHCPEDINDKLSE. The segment covering 28-43 has biased composition (acidic residues); the sequence is STDDDGEDTSDEDKEE. The segment covering 44–53 has biased composition (basic and acidic residues); it reads DSNPNKDTHA. The span at 109–142 shows a compositional bias: acidic residues; sequence LEEDDDESEEDNSESEGESTEDPSEESSDECEDG.

The polypeptide is Glutamate-rich protein 2 (ERICH2) (Bos taurus (Bovine)).